Consider the following 387-residue polypeptide: Large ribosomal subunit protein uL3 (387 aa).

This sequence belongs to the universal ribosomal protein uL3 family.

Its subcellular location is the cytoplasm. The chain is Large ribosomal subunit protein uL3 (RPL3) from Eremothecium gossypii (strain ATCC 10895 / CBS 109.51 / FGSC 9923 / NRRL Y-1056) (Yeast).